The following is an 822-amino-acid chain: Valine--tRNA ligase (822 aa).

A 'HIGH' region motif is present at residues 41–51 (PNVTGQLHLGH). The 'KMSKS' region signature appears at 511 to 515 (KMSKS). Lys-514 contributes to the ATP binding site. A coiled-coil region spans residues 765 to 822 (EQKGRELKEIQFLKSEILRAEKILTNKGFLEKAPREKIDLERTKLEKLKEKLAFYEKK).

It belongs to the class-I aminoacyl-tRNA synthetase family. ValS type 1 subfamily. In terms of assembly, monomer.

It is found in the cytoplasm. It carries out the reaction tRNA(Val) + L-valine + ATP = L-valyl-tRNA(Val) + AMP + diphosphate. Its function is as follows. Catalyzes the attachment of valine to tRNA(Val). As ValRS can inadvertently accommodate and process structurally similar amino acids such as threonine, to avoid such errors, it has a 'posttransfer' editing activity that hydrolyzes mischarged Thr-tRNA(Val) in a tRNA-dependent manner. In Mesomycoplasma hyopneumoniae (strain 232) (Mycoplasma hyopneumoniae), this protein is Valine--tRNA ligase.